The primary structure comprises 146 residues: Snaclec alboaggregin-B subunit beta (146 aa).

The first 23 residues, 1–23 (MGRFIFGSFGLLVLFLSLSGTGA), serve as a signal peptide directing secretion. The region spanning 24–143 (DCPSDWSSYD…CSRTYPFVCK (120 aa)) is the C-type lectin domain. 3 disulfides stabilise this stretch: Cys25/Cys36, Cys53/Cys142, and Cys119/Cys134.

Belongs to the snaclec family. In terms of assembly, heterodimer of subunits alpha and beta; disulfide-linked. As to expression, expressed by the venom gland.

The protein localises to the secreted. Its function is as follows. Weakly agglutinates platelets at high doses by binding to GPIbalpha (GP1BA). This chain is Snaclec alboaggregin-B subunit beta, found in Trimeresurus albolabris (White-lipped pit viper).